The chain runs to 94 residues: Cytochrome b-c1 complex subunit 8, mitochondrial (94 aa).

Residues 2–49 (GPPSGKTYMGWWGHMGGPKQKGITSYAVSPYAQKPLQGIFHNAVFNSF) lie on the Mitochondrial matrix side of the membrane. The chain crosses the membrane as a helical span at residues 50-80 (RRFKSQFLYVLIPAGIYWYWWKNGNEYNEFL). At 81 to 94 (YSKAGREELERVNV) the chain is on the mitochondrial intermembrane side.

Belongs to the UQCRQ/QCR8 family. In terms of assembly, component of the ubiquinol-cytochrome c oxidoreductase (cytochrome b-c1 complex, complex III, CIII), a multisubunit enzyme composed of 10 subunits. The complex is composed of 3 respiratory subunits cytochrome b (COB), cytochrome c1 (CYT1) and Rieske protein (RIP1), 2 core protein subunits COR1 and QCR2, and 5 low-molecular weight protein subunits QCR6, QCR7, QCR8, QCR9 and QCR10. The complex exists as an obligatory dimer and forms supercomplexes (SCs) in the inner mitochondrial membrane with a monomer or a dimer of cytochrome c oxidase (complex IV, CIV), resulting in 2 different assemblies (supercomplexes III(2)IV and III(2)IV(2)).

It localises to the mitochondrion inner membrane. In terms of biological role, component of the ubiquinol-cytochrome c oxidoreductase, a multisubunit transmembrane complex that is part of the mitochondrial electron transport chain which drives oxidative phosphorylation. The respiratory chain contains 3 multisubunit complexes succinate dehydrogenase (complex II, CII), ubiquinol-cytochrome c oxidoreductase (cytochrome b-c1 complex, complex III, CIII) and cytochrome c oxidase (complex IV, CIV), that cooperate to transfer electrons derived from NADH and succinate to molecular oxygen, creating an electrochemical gradient over the inner membrane that drives transmembrane transport and the ATP synthase. The cytochrome b-c1 complex catalyzes electron transfer from ubiquinol to cytochrome c, linking this redox reaction to translocation of protons across the mitochondrial inner membrane, with protons being carried across the membrane as hydrogens on the quinol. In the process called Q cycle, 2 protons are consumed from the matrix, 4 protons are released into the intermembrane space and 2 electrons are passed to cytochrome c. The protein is Cytochrome b-c1 complex subunit 8, mitochondrial (QCR8) of Saccharomyces cerevisiae (strain ATCC 204508 / S288c) (Baker's yeast).